The chain runs to 359 residues: tRNA-specific 2-thiouridylase MnmA (359 aa).

ATP-binding positions include 6 to 13 (AMSGGVDS) and Leu32. The active-site Nucleophile is the Cys97. A disulfide bond links Cys97 and Cys195. ATP is bound at residue Gly121. The interval 144–146 (KDQ) is interaction with tRNA. The active-site Cysteine persulfide intermediate is the Cys195.

This sequence belongs to the MnmA/TRMU family.

The protein localises to the cytoplasm. It carries out the reaction S-sulfanyl-L-cysteinyl-[protein] + uridine(34) in tRNA + AH2 + ATP = 2-thiouridine(34) in tRNA + L-cysteinyl-[protein] + A + AMP + diphosphate + H(+). Its function is as follows. Catalyzes the 2-thiolation of uridine at the wobble position (U34) of tRNA, leading to the formation of s(2)U34. This Tropheryma whipplei (strain Twist) (Whipple's bacillus) protein is tRNA-specific 2-thiouridylase MnmA.